Reading from the N-terminus, the 196-residue chain is Phosphoheptose isomerase (196 aa).

In terms of domain architecture, SIS spans 34-192; sequence MVQCLLGGNK…CEIIDTTLFP (159 aa). Position 49–51 (49–51) interacts with substrate; it reads NGG. Zn(2+) contacts are provided by histidine 58 and glutamine 62. Substrate contacts are provided by residues glutamine 62, 91 to 92, 117 to 119, serine 122, and glutamine 172; these read ND and STS. Positions 172 and 180 each coordinate Zn(2+).

The protein belongs to the SIS family. GmhA subfamily. In terms of assembly, homotetramer. It depends on Zn(2+) as a cofactor.

The protein resides in the cytoplasm. It catalyses the reaction 2 D-sedoheptulose 7-phosphate = D-glycero-alpha-D-manno-heptose 7-phosphate + D-glycero-beta-D-manno-heptose 7-phosphate. Its pathway is carbohydrate biosynthesis; D-glycero-D-manno-heptose 7-phosphate biosynthesis; D-glycero-alpha-D-manno-heptose 7-phosphate and D-glycero-beta-D-manno-heptose 7-phosphate from sedoheptulose 7-phosphate: step 1/1. Catalyzes the isomerization of sedoheptulose 7-phosphate in D-glycero-D-manno-heptose 7-phosphate. The sequence is that of Phosphoheptose isomerase from Colwellia psychrerythraea (strain 34H / ATCC BAA-681) (Vibrio psychroerythus).